Consider the following 119-residue polypeptide: Large ribosomal subunit protein bL20 (119 aa).

It belongs to the bacterial ribosomal protein bL20 family.

Its function is as follows. Binds directly to 23S ribosomal RNA and is necessary for the in vitro assembly process of the 50S ribosomal subunit. It is not involved in the protein synthesizing functions of that subunit. The protein is Large ribosomal subunit protein bL20 of Xylella fastidiosa (strain M23).